The primary structure comprises 312 residues: Elongation factor Ts (312 aa).

The involved in Mg(2+) ion dislocation from EF-Tu stretch occupies residues 80–83 (TDFV).

The protein belongs to the EF-Ts family.

It is found in the cytoplasm. Its function is as follows. Associates with the EF-Tu.GDP complex and induces the exchange of GDP to GTP. It remains bound to the aminoacyl-tRNA.EF-Tu.GTP complex up to the GTP hydrolysis stage on the ribosome. The protein is Elongation factor Ts of Maricaulis maris (strain MCS10) (Caulobacter maris).